A 621-amino-acid polypeptide reads, in one-letter code: tRNA uridine 5-carboxymethylaminomethyl modification enzyme MnmG (621 aa).

Position 8–13 (8–13 (GAGHAG)) interacts with FAD. 269–283 (GPRYCPSVEDKIFRF) is an NAD(+) binding site.

Belongs to the MnmG family. As to quaternary structure, homodimer. Heterotetramer of two MnmE and two MnmG subunits. The cofactor is FAD.

The protein localises to the cytoplasm. Its function is as follows. NAD-binding protein involved in the addition of a carboxymethylaminomethyl (cmnm) group at the wobble position (U34) of certain tRNAs, forming tRNA-cmnm(5)s(2)U34. The protein is tRNA uridine 5-carboxymethylaminomethyl modification enzyme MnmG of Chlorobium phaeobacteroides (strain DSM 266 / SMG 266 / 2430).